Consider the following 210-residue polypeptide: MLEAEGYNAPVAIYAIYLWMSAMSISRLCHYTNTLYVVGEPSSAADIFTASILRLFQFVLTANINAFDFGQYARQQDLVKMLYFPCTAHCNTFKDPVANQLLKGRSFTTMTRDGLVDISEKKCLVRLYQLPHPEHLPTAPDEHIIIRFYEPANGCGFFLGELSRYIHRIHQLQADNDNDALRALLCENKGMLCSRSWTSPCNACHSSHDI.

This is an uncharacterized protein from Fowl adenovirus A serotype 1 (strain CELO / Phelps) (FAdV-1).